The sequence spans 157 residues: 2-C-methyl-D-erythritol 2,4-cyclodiphosphate synthase (157 aa).

A divalent metal cation is bound by residues D8, H10, and H42. A 4-CDP-2-C-methyl-D-erythritol 2-phosphate-binding site is contributed by D8–H10. Residues D56 to G58, S132 to E135, F139, and R142 each bind 4-CDP-2-C-methyl-D-erythritol 2-phosphate.

Belongs to the IspF family. Homotrimer. A divalent metal cation is required as a cofactor.

The enzyme catalyses 4-CDP-2-C-methyl-D-erythritol 2-phosphate = 2-C-methyl-D-erythritol 2,4-cyclic diphosphate + CMP. Its pathway is isoprenoid biosynthesis; isopentenyl diphosphate biosynthesis via DXP pathway; isopentenyl diphosphate from 1-deoxy-D-xylulose 5-phosphate: step 4/6. Its function is as follows. Involved in the biosynthesis of isopentenyl diphosphate (IPP) and dimethylallyl diphosphate (DMAPP), two major building blocks of isoprenoid compounds. Catalyzes the conversion of 4-diphosphocytidyl-2-C-methyl-D-erythritol 2-phosphate (CDP-ME2P) to 2-C-methyl-D-erythritol 2,4-cyclodiphosphate (ME-CPP) with a corresponding release of cytidine 5-monophosphate (CMP). The chain is 2-C-methyl-D-erythritol 2,4-cyclodiphosphate synthase from Dehalococcoides mccartyi (strain ATCC BAA-2266 / KCTC 15142 / 195) (Dehalococcoides ethenogenes (strain 195)).